Reading from the N-terminus, the 182-residue chain is CASP-like protein 2B1 (182 aa).

Residues 1 to 12 are Cytoplasmic-facing; sequence MKLIDRRMRLTE. Residues 13–31 traverse the membrane as a helical segment; that stretch reads LLLRCSISVFALLALILVV. Residues 32–52 lie on the Extracellular side of the membrane; sequence TDTEVKLIFTIKKTAKYTDMK. The helical transmembrane segment at 53–73 threads the bilayer; that stretch reads AVVFLVVANGIAAVYSLLQSV. Over 74-89 the chain is Cytoplasmic; it reads RCVVGTMKGKVLFSKP. Residues 90 to 110 traverse the membrane as a helical segment; it reads LAWAFFSGDQAMAYLNVAAIA. Topologically, residues 111-141 are extracellular; the sequence is ATAESGVIAREGEEDLQWMRVCTMYGKFCNQ. Residues 142–162 traverse the membrane as a helical segment; sequence MAIGVSSALLASIAMVFVSCI. The Cytoplasmic portion of the chain corresponds to 163–182; the sequence is SAFSLFRLYGATKDRRTTPW.

This sequence belongs to the Casparian strip membrane proteins (CASP) family. Homodimer and heterodimers.

The protein resides in the cell membrane. The sequence is that of CASP-like protein 2B1 from Arabidopsis thaliana (Mouse-ear cress).